The following is a 53-amino-acid chain: uncharacterized protein (53 aa).

This sequence belongs to the ELIP/psbS family.

It localises to the plastid. It is found in the chloroplast. Its function is as follows. Possible role in chlorophyll and/or carotenoid binding. This is an uncharacterized protein from Guillardia theta (Cryptophyte).